Reading from the N-terminus, the 282-residue chain is uncharacterized protein (282 aa).

The region spanning 5–140 is the N-acetyltransferase domain; that stretch reads DELIKLHEEH…SFQPYTKKLD (136 aa).

The protein belongs to the acetyltransferase family.

This is an uncharacterized protein from Bacillus subtilis (strain 168).